The chain runs to 198 residues: Phycocyanobilin lyase CpcT homolog (198 aa).

It belongs to the CpcT/CpeT biliprotein lyase family.

Its function is as follows. Covalently attaches a chromophore to Cys residue(s) of phycobiliproteins. In vitro is not seen to act as a chromophore lyase for ApcA1, ApcA2, ApcB, ApcD, ApcF, CpcB or PecB, the lyase activity is therefore unsure. The chain is Phycocyanobilin lyase CpcT homolog (cpcT2) from Nostoc sp. (strain PCC 7120 / SAG 25.82 / UTEX 2576).